An 89-amino-acid polypeptide reads, in one-letter code: Small ribosomal subunit protein uS15 (89 aa).

This sequence belongs to the universal ribosomal protein uS15 family. As to quaternary structure, part of the 30S ribosomal subunit. Forms a bridge to the 50S subunit in the 70S ribosome, contacting the 23S rRNA.

Its function is as follows. One of the primary rRNA binding proteins, it binds directly to 16S rRNA where it helps nucleate assembly of the platform of the 30S subunit by binding and bridging several RNA helices of the 16S rRNA. Functionally, forms an intersubunit bridge (bridge B4) with the 23S rRNA of the 50S subunit in the ribosome. In Streptococcus pyogenes serotype M2 (strain MGAS10270), this protein is Small ribosomal subunit protein uS15.